A 285-amino-acid chain; its full sequence is 2,3,4,5-tetrahydropyridine-2,6-dicarboxylate N-succinyltransferase (285 aa).

Substrate contacts are provided by R111 and D148.

The protein belongs to the transferase hexapeptide repeat family. In terms of assembly, homotrimer.

The protein resides in the cytoplasm. The enzyme catalyses (S)-2,3,4,5-tetrahydrodipicolinate + succinyl-CoA + H2O = (S)-2-succinylamino-6-oxoheptanedioate + CoA. The protein operates within amino-acid biosynthesis; L-lysine biosynthesis via DAP pathway; LL-2,6-diaminopimelate from (S)-tetrahydrodipicolinate (succinylase route): step 1/3. This is 2,3,4,5-tetrahydropyridine-2,6-dicarboxylate N-succinyltransferase from Rhizobium rhizogenes (strain K84 / ATCC BAA-868) (Agrobacterium radiobacter).